Reading from the N-terminus, the 231-residue chain is Probable septum site-determining protein MinC (231 aa).

Residues 100 to 125 are disordered; it reads EGKEKSPRPAPAPQAPAQNTTPVTKT.

This sequence belongs to the MinC family. Interacts with MinD and FtsZ.

In terms of biological role, cell division inhibitor that blocks the formation of polar Z ring septums. Rapidly oscillates between the poles of the cell to destabilize FtsZ filaments that have formed before they mature into polar Z rings. Prevents FtsZ polymerization. The polypeptide is Probable septum site-determining protein MinC (Escherichia coli O81 (strain ED1a)).